Here is a 320-residue protein sequence, read N- to C-terminus: Heterogeneous nuclear ribonucleoprotein A1 (320 aa).

N-acetylmethionine is present on methionine 1. An N-acetylserine; in Heterogeneous nuclear ribonucleoprotein A1, N-terminally processed modification is found at serine 2. Serine 2 carries the post-translational modification Phosphoserine. Lysine 3 is modified (N6-acetyllysine; alternate). A Glycyl lysine isopeptide (Lys-Gly) (interchain with G-Cter in SUMO2); alternate cross-link involves residue lysine 3. A phosphoserine mark is found at serine 4 and serine 6. A globular A domain region spans residues 4-94 (SESPKEPEQL…EPKRAVSRED (91 aa)). Lysine 8 participates in a covalent cross-link: Glycyl lysine isopeptide (Lys-Gly) (interchain with G-Cter in SUMO2). RRM domains are found at residues 14 to 97 (RKLF…DSQR) and 105 to 184 (KKIF…LSKQ). At serine 22 the chain carries Phosphoserine. Residue lysine 78 forms a Glycyl lysine isopeptide (Lys-Gly) (interchain with G-Cter in SUMO2) linkage. A globular B domain region spans residues 95 to 185 (SQRPGAHLTV…EVRKALSKQE (91 aa)). Lysine 113 is covalently cross-linked (Glycyl lysine isopeptide (Lys-Gly) (interchain with G-Cter in SUMO)). Glycyl lysine isopeptide (Lys-Gly) (interchain with G-Cter in SUMO2) cross-links involve residues lysine 179 and lysine 183. Positions 182–216 (SKQEMASASSSQRGRSGSGNFGGGRGGGFGGNDNF) are disordered. Phosphoserine; by MKNK2 is present on serine 192. Arginine 194 carries the post-translational modification Asymmetric dimethylarginine; alternate. The residue at position 194 (arginine 194) is a Dimethylated arginine; alternate. The residue at position 194 (arginine 194) is an Omega-N-methylarginine; alternate. The span at 197–216 (SGSGNFGGGRGGGFGGNDNF) shows a compositional bias: gly residues. Serine 199 is modified (phosphoserine). An asymmetric dimethylarginine; alternate mark is found at arginine 206, arginine 218, arginine 225, and arginine 232. Arginine 206 is subject to Dimethylated arginine; alternate. Omega-N-methylarginine; alternate is present on residues arginine 206, arginine 218, arginine 225, and arginine 232. The RNA-binding RGG-box stretch occupies residues 218–240 (RGGNFSGRGGFGGSRGGGGYGGS). Arginine 225 carries the dimethylated arginine; alternate modification. Residues 268 to 305 (NQSSNFGPMKGGNFGGRSSGPYGGGGQYFAKPRNQGGY) are nuclear targeting sequence. The disordered stretch occupies residues 274–320 (GPMKGGNFGGRSSGPYGGGGQYFAKPRNQGGYGGSSSSSSYGSGRRF). The segment covering 276-294 (MKGGNFGGRSSGPYGGGGQ) has biased composition (gly residues). Residue arginine 284 is modified to Omega-N-methylarginine. A Phosphoserine modification is found at serine 285. Lysine 298 carries the post-translational modification N6-acetyllysine; alternate. Residue lysine 298 forms a Glycyl lysine isopeptide (Lys-Gly) (interchain with G-Cter in SUMO2); alternate linkage. At arginine 300 the chain carries Omega-N-methylarginine. Residues 308–320 (SSSSSSYGSGRRF) are compositionally biased toward low complexity. A Phosphoserine modification is found at serine 309. A phosphoserine; by MKNK2 mark is found at serine 310, serine 311, and serine 312. Residues serine 313 and serine 316 each carry the phosphoserine modification. At arginine 318 the chain carries Omega-N-methylarginine.

In terms of assembly, identified in the spliceosome C complex. Identified in a IGF2BP1-dependent mRNP granule complex containing untranslated mRNAs. Interacts with SEPT6. Interacts with C9orf72. Interacts with KHDRBS1. Interacts with UBQLN2. Interacts with PPIA/CYPA. Post-translationally, sumoylated.

It localises to the nucleus. The protein localises to the cytoplasm. Involved in the packaging of pre-mRNA into hnRNP particles, transport of poly(A) mRNA from the nucleus to the cytoplasm and modulation of splice site selection. Plays a role in the splicing of pyruvate kinase PKM by binding repressively to sequences flanking PKM exon 9, inhibiting exon 9 inclusion and resulting in exon 10 inclusion and production of the PKM M2 isoform. Binds to the IRES and thereby inhibits the translation of the apoptosis protease activating factor APAF1. May bind to specific miRNA hairpins. In Mus musculus (Mouse), this protein is Heterogeneous nuclear ribonucleoprotein A1 (Hnrnpa1).